Consider the following 49-residue polypeptide: Small, acid-soluble spore protein O (49 aa).

Positions 1-49 are disordered; that stretch reads MGKRKANHTISGMNAASAQGQGTGYNEEFANEPLTPAERQNNKKRKKNQ. Residues 8–20 show a composition bias toward polar residues; it reads HTISGMNAASAQG.

The protein belongs to the SspO family.

It localises to the spore core. This Bacillus cereus (strain B4264) protein is Small, acid-soluble spore protein O.